The sequence spans 288 residues: DNA repair protein RecO (288 aa).

The protein belongs to the RecO family.

Its function is as follows. Involved in DNA repair and RecF pathway recombination. This is DNA repair protein RecO from Trichodesmium erythraeum (strain IMS101).